The sequence spans 497 residues: UPF0371 protein cu0538 (497 aa).

Belongs to the UPF0371 family.

This Corynebacterium urealyticum (strain ATCC 43042 / DSM 7109) protein is UPF0371 protein cu0538.